The primary structure comprises 323 residues: MEIRVANKYALGKKLGSGSFGDIYVAKDIVTMEEFAVKLESTRSKHPQLLYESKLYKILGGGIGVPKVYWYGIEGDFTIMVLDLLGPSLEDLFTLCNRKFSLKTVLMTADQMLNRIEYVHSKNFIHRDIKPDNFLIGRGKKVTLIHIIDFGLAKKYRDSRSHTHIPYKEGKNLTGTARYASINTHLGIEQSRRDDIEALGYVLMYFLRGSLPWQGLKAISKKDKYDKIMEKKISTSVEVLCRNTSFEFVTYLNYCRSLRFEDRPDYTYLRRLLKDLFIREGFTYDFLFDWTCVYASEKDKKKMLENKNRFDQIADQEGRVKQN.

The 270-residue stretch at 9–278 (YALGKKLGSG…LRRLLKDLFI (270 aa)) folds into the Protein kinase domain. Residues 15–23 (LGSGSFGDI) and lysine 38 contribute to the ATP site. Catalysis depends on aspartate 128, which acts as the Proton acceptor.

The protein belongs to the protein kinase superfamily. CK1 Ser/Thr protein kinase family. Casein kinase I subfamily. Mg(2+) is required as a cofactor.

It localises to the cytoplasm. The protein localises to the cytoplasmic vesicle. It is found in the secretory vesicle. The protein resides in the microneme. Its subcellular location is the secreted. It localises to the host cell surface. It catalyses the reaction L-seryl-[protein] + ATP = O-phospho-L-seryl-[protein] + ADP + H(+). The catalysed reaction is L-threonyl-[protein] + ATP = O-phospho-L-threonyl-[protein] + ADP + H(+). Functionally, serine/threonine-protein kinase likely to be involved in many cellular processes. The sequence is that of Casein kinase I (CK1) from Plasmodium yoelii yoelii.